Here is a 313-residue protein sequence, read N- to C-terminus: Ribosomal RNA small subunit methyltransferase H (313 aa).

Residues Gly36–His38, Asp56, Phe80, Asp102, and Gln109 contribute to the S-adenosyl-L-methionine site.

Belongs to the methyltransferase superfamily. RsmH family.

The protein localises to the cytoplasm. It carries out the reaction cytidine(1402) in 16S rRNA + S-adenosyl-L-methionine = N(4)-methylcytidine(1402) in 16S rRNA + S-adenosyl-L-homocysteine + H(+). In terms of biological role, specifically methylates the N4 position of cytidine in position 1402 (C1402) of 16S rRNA. The sequence is that of Ribosomal RNA small subunit methyltransferase H from Actinobacillus pleuropneumoniae serotype 7 (strain AP76).